A 380-amino-acid chain; its full sequence is Chaperone protein DnaJ (380 aa).

The 65-residue stretch at 5–69 (DYYEILGVSK…QKRAHYDQFG (65 aa)) folds into the J domain. The segment at 135–217 (GKETDIEIPR…CGGTGRVKKR (83 aa)) adopts a CR-type zinc-finger fold. Zn(2+)-binding residues include Cys148, Cys151, Cys165, Cys168, Cys191, Cys194, Cys205, and Cys208. CXXCXGXG motif repeat units follow at residues 148-155 (CDTCHGTG), 165-172 (CSYCHGTG), 191-198 (CPYCGGTG), and 205-212 (CTTCGGTG).

It belongs to the DnaJ family. Homodimer. The cofactor is Zn(2+).

The protein localises to the cytoplasm. Its function is as follows. Participates actively in the response to hyperosmotic and heat shock by preventing the aggregation of stress-denatured proteins and by disaggregating proteins, also in an autonomous, DnaK-independent fashion. Unfolded proteins bind initially to DnaJ; upon interaction with the DnaJ-bound protein, DnaK hydrolyzes its bound ATP, resulting in the formation of a stable complex. GrpE releases ADP from DnaK; ATP binding to DnaK triggers the release of the substrate protein, thus completing the reaction cycle. Several rounds of ATP-dependent interactions between DnaJ, DnaK and GrpE are required for fully efficient folding. Also involved, together with DnaK and GrpE, in the DNA replication of plasmids through activation of initiation proteins. In Geobacillus sp. (strain WCH70), this protein is Chaperone protein DnaJ.